Here is a 142-residue protein sequence, read N- to C-terminus: MKRWEHYEHTADIGIRGYGDSLEEAFEAVAIALFDVIVNVNKVEKKEVREVEVEGEDLESLLYNFLEELLVIHDIEGLVFRDFEVKIEKTEKGYKLKAKAYGEKLDPEKHEPKEEVKAITYHDMKIEKLPDGRWMAQLVPDI.

Aspartate 12, aspartate 141, and isoleucine 142 together coordinate Ca(2+).

It belongs to the archease family. As to quaternary structure, in solution, exists as a monomer, trimer and hexamer. Oligomeric states form a tripartite complex with tRNA and PAB1947 methyltransferase.

Functionally, activates the tRNA-splicing ligase complex by facilitating the enzymatic turnover of catalytic subunit RtcB. Acts by promoting the guanylylation of RtcB, a key intermediate step in tRNA ligation. Can also alter the NTP specificity of RtcB such that ATP, dGTP or ITP is used efficiently. Chaperone or modulator of proteins involved in DNA or RNA processing. Protects the tRNA (cytosine-5-)-methyltransferase PAB1947 against aggregation and increases its specificity. This Pyrococcus abyssi (strain GE5 / Orsay) protein is Protein archease.